The primary structure comprises 337 residues: DNA-directed RNA polymerase subunit alpha (337 aa).

Residues 1–233 (MVREKVTVST…DLFIPFLHME (233 aa)) are alpha N-terminal domain (alpha-NTD). The alpha C-terminal domain (alpha-CTD) stretch occupies residues 265-337 (KKIALKSIFI…FVIDLAKNKF (73 aa)).

This sequence belongs to the RNA polymerase alpha chain family. In plastids the minimal PEP RNA polymerase catalytic core is composed of four subunits: alpha, beta, beta', and beta''. When a (nuclear-encoded) sigma factor is associated with the core the holoenzyme is formed, which can initiate transcription.

It localises to the plastid. The protein resides in the chloroplast. The enzyme catalyses RNA(n) + a ribonucleoside 5'-triphosphate = RNA(n+1) + diphosphate. Its function is as follows. DNA-dependent RNA polymerase catalyzes the transcription of DNA into RNA using the four ribonucleoside triphosphates as substrates. This Solanum lycopersicum (Tomato) protein is DNA-directed RNA polymerase subunit alpha.